A 149-amino-acid polypeptide reads, in one-letter code: Endoribonuclease YbeY (149 aa).

Residues His101, His105, and His111 each coordinate Zn(2+).

Belongs to the endoribonuclease YbeY family. Zn(2+) is required as a cofactor.

It is found in the cytoplasm. In terms of biological role, single strand-specific metallo-endoribonuclease involved in late-stage 70S ribosome quality control and in maturation of the 3' terminus of the 16S rRNA. This is Endoribonuclease YbeY from Thermotoga neapolitana (strain ATCC 49049 / DSM 4359 / NBRC 107923 / NS-E).